We begin with the raw amino-acid sequence, 358 residues long: Protein FAM187B (358 aa).

The first 17 residues, 1–17, serve as a signal peptide directing secretion; sequence MLATLWLVGLSLPMLWA. Over 18-322 the chain is Extracellular; the sequence is QRLISCPYKN…DKADSVLRRL (305 aa). The N-linked (GlcNAc...) asparagine glycan is linked to Asn-127. A helical transmembrane segment spans residues 323-343; sequence KLMVLSISVLAVGGLLCKVVF. Over 344 to 358 the chain is Cytoplasmic; sequence RPVCGKKRSQVLLVK.

Belongs to the FAM187 family.

It localises to the membrane. This Mus musculus (Mouse) protein is Protein FAM187B (Fam187b).